The primary structure comprises 838 residues: Glutenin, high molecular weight subunit PW212 (838 aa).

An N-terminal signal peptide occupies residues 1–21; the sequence is MAKRLVLFVAVVVALVALTVA. Residues 122-794 are disordered; that stretch reads SYYPGQASPQ…GQQSGQGQQG (673 aa). Positions 125–136 are enriched in low complexity; sequence PGQASPQRPGQG. The span at 137 to 149 shows a compositional bias: gly residues; it reads QQPGQGQQSGQGQ. 12 stretches are compositionally biased toward low complexity: residues 150-172, 179-208, 215-245, 268-308, 315-356, 364-416, 445-473, 481-532, 549-643, 654-677, 699-719, and 729-773; these read QGYY…GQPG, QQPG…GQPG, QLQP…PGQG, QGQQ…GQSG, QQPG…PGQG, PGYY…PGQG, SPQQ…PGQG, QGQQ…YPTS, QQPG…QGQP, GQGQ…GQPG, QQPG…GQHG, and GQGQ…GQQG.

This sequence belongs to the gliadin/glutenin family. As to quaternary structure, disulfide-bridge linked aggregates.

Its function is as follows. Glutenins are high-molecular weight seed storage proteins of wheat endosperm. Thought to be responsible for the visco-elastic property of wheat dough. In Triticum aestivum (Wheat), this protein is Glutenin, high molecular weight subunit PW212.